The chain runs to 608 residues: Afamin (608 aa).

Residues 1-21 form the signal peptide; that stretch reads MRHLKLTGFIFFLLSLTESLA. Albumin domains lie at 22 to 210, 211 to 403, and 404 to 599; these read LPTK…APIT, QYLK…KFNE, and TTER…KTGD. A glycan (N-linked (GlcNAc...) asparagine) is linked at Asn33. 10 disulfides stabilise this stretch: Cys77-Cys86, Cys99-Cys114, Cys113-Cys124, Cys148-Cys193, Cys224-Cys270, Cys269-Cys277, Cys289-Cys303, Cys302-Cys313, Cys340-Cys385, and Cys384-Cys393. N-linked (GlcNAc...) asparagine glycosylation occurs at Asn109. Asn153 is a glycosylation site (N-linked (GlcNAc...) asparagine). Residues 215 to 319 are binding pocket for hydrophobic ligands; that stretch reads ALSSYQRNVC…RADCIINANK (105 aa). Asn402 carries an N-linked (GlcNAc...) asparagine glycan. Cystine bridges form between Cys416-Cys462, Cys461-Cys470, Cys483-Cys499, Cys498-Cys509, and Cys580-Cys589. Asn488 is a glycosylation site (N-linked (GlcNAc...) asparagine). A disordered region spans residues 585–608; sequence KPEACFSPESSKTGDVSQDAEKQR.

The protein belongs to the ALB/AFP/VDB family. Forms a 1:1 complex with Wnt family members; interacts with WNT1, WNT2B, WNT3, WNT3A, WNT5A, WNT7A, WNT7B, WNT8, WNT9A, WNT9B, WNT10A and WNT10B. In terms of processing, N-glycosylated; more than 90% of the glycans are sialylated.

It localises to the secreted. Functions as a carrier for hydrophobic molecules in body fluids. Essential for the solubility and activity of lipidated Wnt family members, including WNT1, WNT2B, WNT3, WNT3A, WNT5A, WNT7A, WNT7B, WNT8, WNT9A, WNT9B, WNT10A and WNT10B. Binds vitamin E. May transport vitamin E in body fluids under conditions where the lipoprotein system is not sufficient. May be involved in the transport of vitamin E across the blood-brain barrier. In Rattus norvegicus (Rat), this protein is Afamin (Afm).